A 1100-amino-acid chain; its full sequence is Beta-alanine-activating enzyme (1100 aa).

The interval 162–181 (HKVTDREDRVSAESRTPEKE) is disordered. ATP-binding positions include 197–205 (TSGTTGTPK), Asp-427, Arg-441, and Lys-526. Residues 552 to 632 (EELWGKLQYL…DVYNHIVQAV (81 aa)) form the Carrier domain. Ser-591 is subject to O-(pantetheine 4'-phosphoryl)serine. A disordered region spans residues 643–671 (SYTTKRKFSDADPEEASGKPARLESAWPS). Ser-651 carries the phosphoserine modification.

The protein belongs to the ATP-dependent AMP-binding enzyme family.

Functionally, covalently binds beta-alanine in an ATP-dependent manner to form a thioester bond with its phosphopantetheine group and transfers it to an as yet unknown acceptor via an amide bond. May be required for a post-translational protein modification or for post-transcriptional modification of an RNA. In Mus musculus (Mouse), this protein is Beta-alanine-activating enzyme (Aasdh).